The chain runs to 268 residues: MERYDLCFKRLAEKQEGAFVPFVTLGDPTPELSLQIIDALVAGGADALELGIPFSDPLADGPTIQNANLRAFAAGVTPEHCFDMLAAIRQKYPDMPIGLLMYANLVFSNGIDSFYARCQQVGVDSVLVADVPVEESAPFRQAAMRHNVAPIFICPPNAGDDLLREISSHGRGYTYLLSRAGVTGSETRASLPLKHLVDKLREYHAAPALQGFGISEASQVQQAISAGAAGAISGSAVVRIIEKHLNDPALMLSELTAFAASLKAATRS.

Active-site proton acceptor residues include Glu-49 and Asp-60.

Belongs to the TrpA family. Tetramer of two alpha and two beta chains.

The catalysed reaction is (1S,2R)-1-C-(indol-3-yl)glycerol 3-phosphate + L-serine = D-glyceraldehyde 3-phosphate + L-tryptophan + H2O. It functions in the pathway amino-acid biosynthesis; L-tryptophan biosynthesis; L-tryptophan from chorismate: step 5/5. Its function is as follows. The alpha subunit is responsible for the aldol cleavage of indoleglycerol phosphate to indole and glyceraldehyde 3-phosphate. This Erwinia tasmaniensis (strain DSM 17950 / CFBP 7177 / CIP 109463 / NCPPB 4357 / Et1/99) protein is Tryptophan synthase alpha chain.